Reading from the N-terminus, the 295-residue chain is Probable deoxyhypusine synthase (295 aa).

The active-site Nucleophile is K267.

Belongs to the deoxyhypusine synthase family. It depends on NAD(+) as a cofactor.

It carries out the reaction [eIF5A protein]-L-lysine + spermidine = [eIF5A protein]-deoxyhypusine + propane-1,3-diamine. Its pathway is protein modification; eIF5A hypusination. Functionally, catalyzes the NAD-dependent oxidative cleavage of spermidine and the subsequent transfer of the butylamine moiety of spermidine to the epsilon-amino group of a specific lysine residue of the eIF-5A precursor protein to form the intermediate deoxyhypusine residue. The chain is Probable deoxyhypusine synthase from Pyrobaculum calidifontis (strain DSM 21063 / JCM 11548 / VA1).